Consider the following 1456-residue polypeptide: DNA polymerase gamma, mitochondrial (1456 aa).

The N-terminal 41 residues, 1–41 (MLTPVRCRTVPNATVATAARVLRRANLFSRYPRQLGHLRWD), are a transit peptide targeting the mitochondrion. Disordered stretches follow at residues 1200–1266 (APEM…SLDD) and 1308–1443 (AVTT…SWKP). The segment covering 1204–1239 (AAVPSTSSESKSKASATTSTTTTENATASPSSSSNV) has biased composition (low complexity). The span at 1315-1325 (PEPPTNPPPVA) shows a compositional bias: pro residues. Composition is skewed to low complexity over residues 1346–1371 (PKNPTPTLTPTTKKSNPTSTPTTPKP) and 1411–1428 (TASVGGRATTTTATATAT).

It belongs to the DNA polymerase type-A family. The cofactor is Mg(2+).

Its subcellular location is the mitochondrion. It carries out the reaction DNA(n) + a 2'-deoxyribonucleoside 5'-triphosphate = DNA(n+1) + diphosphate. In terms of biological role, involved in the replication of mitochondrial DNA. This Neurospora crassa (strain ATCC 24698 / 74-OR23-1A / CBS 708.71 / DSM 1257 / FGSC 987) protein is DNA polymerase gamma, mitochondrial (mip-1).